Here is a 734-residue protein sequence, read N- to C-terminus: Photosystem I P700 chlorophyll a apoprotein A2 (734 aa).

The next 8 helical transmembrane spans lie at 46 to 69 (IFAS…FHVA), 135 to 158 (LYAG…LHLQ), 175 to 199 (LNHH…HVAI), 273 to 291 (MAHH…GHMY), 330 to 353 (LHFQ…QHMY), 369 to 395 (AALY…IFLI), 417 to 439 (AIIS…LYVH), and 517 to 535 (FLVH…LILV). [4Fe-4S] cluster contacts are provided by Cys-559 and Cys-568. A run of 2 helical transmembrane segments spans residues 575-596 (AFYL…YWHW) and 643-665 (LSVW…MFLI). The chlorophyll a site is built by His-654, Met-662, and Tyr-670. Phylloquinone is bound at residue Trp-671. The chain crosses the membrane as a helical span at residues 707 to 727 (LVGLAHFSVGYIFTYAAFLIA).

This sequence belongs to the PsaA/PsaB family. The PsaA/B heterodimer binds the P700 chlorophyll special pair and subsequent electron acceptors. PSI consists of a core antenna complex that captures photons, and an electron transfer chain that converts photonic excitation into a charge separation. The eukaryotic PSI reaction center is composed of at least 11 subunits. P700 is a chlorophyll a/chlorophyll a' dimer, A0 is one or more chlorophyll a, A1 is one or both phylloquinones and FX is a shared 4Fe-4S iron-sulfur center. serves as cofactor.

Its subcellular location is the plastid. It is found in the chloroplast thylakoid membrane. The enzyme catalyses reduced [plastocyanin] + hnu + oxidized [2Fe-2S]-[ferredoxin] = oxidized [plastocyanin] + reduced [2Fe-2S]-[ferredoxin]. Its function is as follows. PsaA and PsaB bind P700, the primary electron donor of photosystem I (PSI), as well as the electron acceptors A0, A1 and FX. PSI is a plastocyanin-ferredoxin oxidoreductase, converting photonic excitation into a charge separation, which transfers an electron from the donor P700 chlorophyll pair to the spectroscopically characterized acceptors A0, A1, FX, FA and FB in turn. Oxidized P700 is reduced on the lumenal side of the thylakoid membrane by plastocyanin. In Pinus thunbergii (Japanese black pine), this protein is Photosystem I P700 chlorophyll a apoprotein A2.